We begin with the raw amino-acid sequence, 981 residues long: Rab3 GTPase-activating protein catalytic subunit (981 aa).

Ser83, Ser379, Ser537, Ser579, Ser581, and Ser590 each carry phosphoserine. Residues 592–613 form a disordered region; sequence TEELKGNGQESGKKGGPKEMAN. Residue Ser664 is modified to Phosphoserine. The residue at position 908 (Thr908) is a Phosphothreonine. Positions 908-937 are disordered; that stretch reads TPPEEELKRMGSPEERRQNSVSDFPPPAGR. Residues 912-925 are compositionally biased toward basic and acidic residues; the sequence is EELKRMGSPEERRQ.

Belongs to the Rab3-GAP catalytic subunit family. In terms of assembly, the Rab3 GTPase-activating complex is a heterodimer composed of RAB3GAP1 and RAB3GAP2. The Rab3 GTPase-activating complex interacts with DMXL2. Interacts with LMAN1. Ubiquitous.

The protein resides in the cytoplasm. The protein localises to the endoplasmic reticulum. Its subcellular location is the golgi apparatus. It localises to the cis-Golgi network. Catalytic subunit of the Rab3 GTPase-activating (Rab3GAP) complex composed of RAB3GAP1 and RAB3GAP2, which has GTPase-activating protein (GAP) activity towards various Rab3 subfamily members (RAB3A, RAB3B, RAB3C and RAB3D), RAB5A and RAB43, and guanine nucleotide exchange factor (GEF) activity towards RAB18. As part of the Rab3GAP complex, acts as a GAP for Rab3 proteins by converting active RAB3-GTP to the inactive form RAB3-GDP. Rab3 proteins are involved in regulated exocytosis of neurotransmitters and hormones. The Rab3GAP complex, acts as a GEF for RAB18 by promoting the conversion of inactive RAB18-GDP to the active form RAB18-GTP. Recruits and stabilizes RAB18 at the cis-Golgi membrane in fibroblasts where RAB18 is most likely activated. Also involved in RAB18 recruitment at the endoplasmic reticulum (ER) membrane where it maintains proper ER structure. Required for normal eye and brain development. May participate in neurodevelopmental processes such as proliferation, migration and differentiation before synapse formation, and non-synaptic vesicular release of neurotransmitters. This is Rab3 GTPase-activating protein catalytic subunit from Homo sapiens (Human).